The following is a 571-amino-acid chain: Coiled-coil domain-containing protein 22 homolog (571 aa).

Coiled-coil stretches lie at residues 406–434 (MMDL…SRTA) and 509–571 (CAEL…AHLR).

Belongs to the CCDC22 family.

The chain is Coiled-coil domain-containing protein 22 homolog from Culex quinquefasciatus (Southern house mosquito).